The following is a 315-amino-acid chain: Ribosomal RNA small subunit methyltransferase H (315 aa).

Residues 33–35 (AGH), Asp-53, Phe-80, Asp-101, and Gln-108 contribute to the S-adenosyl-L-methionine site.

Belongs to the methyltransferase superfamily. RsmH family.

The protein localises to the cytoplasm. The catalysed reaction is cytidine(1402) in 16S rRNA + S-adenosyl-L-methionine = N(4)-methylcytidine(1402) in 16S rRNA + S-adenosyl-L-homocysteine + H(+). Its function is as follows. Specifically methylates the N4 position of cytidine in position 1402 (C1402) of 16S rRNA. The chain is Ribosomal RNA small subunit methyltransferase H from Natranaerobius thermophilus (strain ATCC BAA-1301 / DSM 18059 / JW/NM-WN-LF).